Here is a 148-residue protein sequence, read N- to C-terminus: SsrA-binding protein (148 aa).

This sequence belongs to the SmpB family.

The protein localises to the cytoplasm. Functionally, required for rescue of stalled ribosomes mediated by trans-translation. Binds to transfer-messenger RNA (tmRNA), required for stable association of tmRNA with ribosomes. tmRNA and SmpB together mimic tRNA shape, replacing the anticodon stem-loop with SmpB. tmRNA is encoded by the ssrA gene; the 2 termini fold to resemble tRNA(Ala) and it encodes a 'tag peptide', a short internal open reading frame. During trans-translation Ala-aminoacylated tmRNA acts like a tRNA, entering the A-site of stalled ribosomes, displacing the stalled mRNA. The ribosome then switches to translate the ORF on the tmRNA; the nascent peptide is terminated with the 'tag peptide' encoded by the tmRNA and targeted for degradation. The ribosome is freed to recommence translation, which seems to be the essential function of trans-translation. The sequence is that of SsrA-binding protein from Azoarcus sp. (strain BH72).